The primary structure comprises 106 residues: Isocitrate dehydrogenase [NAD] subunit gamma, mitochondrial (106 aa).

It belongs to the isocitrate and isopropylmalate dehydrogenases family. As to quaternary structure, heterooligomer of subunits alpha (IDH3A), beta (IDH3B), and gamma (IDH3G) in the apparent ratio of 2:1:1. The heterodimer containing one IDH3A and one IDH3B subunit and the heterodimer containing one IDH3A and one IDH3G subunit assemble into a heterotetramer (which contains two subunits of IDH3A, one of IDH3B and one of IDH3G) and further into the heterooctamer.

It localises to the mitochondrion. With respect to regulation, the heterotetramer and the heterodimer composed of IDH3A and IDH3G subunits can be allosterically activated by citrate (CIT) or/and ADP, and the two activators can act independently or synergistically. The heterodimer composed of IDH3A and IDH3B subunits cannot be allosterically regulated and the allosteric regulation of the heterotetramer is through the IDH3G subunit and not the IDH3B subunit. The IDH3G subunit contains the allosteric site which consists of a CIT-binding site and an ADP-binding site, and the binding of CIT and ADP causes conformational changes at the allosteric site which are transmitted to the active site in the catalytic subunit (IDH3A) through a cascade of conformational changes at the heterodimer interface, leading to stabilization of the isocitrate-binding at the active site and thus activation of the enzyme. ATP can activate the heterotetramer and the heterodimer composed of IDH3A and IDH3G subunits at low concentrations but inhibits their activities at high concentrations, whereas ATP exhibits only inhibitory effect on the heterodimer composed of IDH3A and IDH3B subunits. Regulatory subunit which plays a role in the allosteric regulation of the enzyme catalyzing the decarboxylation of isocitrate (ICT) into alpha-ketoglutarate. The heterodimer composed of the alpha (IDH3A) and beta (IDH3B) subunits and the heterodimer composed of the alpha (IDH3A) and gamma (IDH3G) subunits, have considerable basal activity but the full activity of the heterotetramer (containing two subunits of IDH3A, one of IDH3B and one of IDH3G) requires the assembly and cooperative function of both heterodimers. This is Isocitrate dehydrogenase [NAD] subunit gamma, mitochondrial (IDH3G) from Sus scrofa (Pig).